The primary structure comprises 503 residues: Maturase K (503 aa).

It belongs to the intron maturase 2 family. MatK subfamily.

The protein localises to the plastid. Its subcellular location is the chloroplast. Functionally, usually encoded in the trnK tRNA gene intron. Probably assists in splicing its own and other chloroplast group II introns. The chain is Maturase K from Rosa canina (Dog rose).